The following is a 450-amino-acid chain: Probable glycine dehydrogenase (decarboxylating) subunit 1 (450 aa).

It belongs to the GcvP family. N-terminal subunit subfamily. As to quaternary structure, the glycine cleavage system is composed of four proteins: P, T, L and H. In this organism, the P 'protein' is a heterodimer of two subunits.

The enzyme catalyses N(6)-[(R)-lipoyl]-L-lysyl-[glycine-cleavage complex H protein] + glycine + H(+) = N(6)-[(R)-S(8)-aminomethyldihydrolipoyl]-L-lysyl-[glycine-cleavage complex H protein] + CO2. The glycine cleavage system catalyzes the degradation of glycine. The P protein binds the alpha-amino group of glycine through its pyridoxal phosphate cofactor; CO(2) is released and the remaining methylamine moiety is then transferred to the lipoamide cofactor of the H protein. In Desulfotalea psychrophila (strain LSv54 / DSM 12343), this protein is Probable glycine dehydrogenase (decarboxylating) subunit 1.